The chain runs to 369 residues: 2-aminoethylphosphonate--pyruvate transaminase 1 (369 aa).

An N6-(pyridoxal phosphate)lysine modification is found at K191.

The protein belongs to the class-V pyridoxal-phosphate-dependent aminotransferase family. PhnW subfamily. As to quaternary structure, homodimer. Requires pyridoxal 5'-phosphate as cofactor.

It carries out the reaction (2-aminoethyl)phosphonate + pyruvate = phosphonoacetaldehyde + L-alanine. Involved in phosphonate degradation. This is 2-aminoethylphosphonate--pyruvate transaminase 1 from Burkholderia lata (strain ATCC 17760 / DSM 23089 / LMG 22485 / NCIMB 9086 / R18194 / 383).